A 559-amino-acid polypeptide reads, in one-letter code: Membrane protein insertase YidC (559 aa).

The chain crosses the membrane as a helical span at residues 6–26; sequence TVLWMIFSFSLLLLWNNWQIH. The tract at residues 34 to 80 is disordered; that stretch reads GGPSPEQNAPATANNQAATNPASNTPAVPNAPAATSAPSSVPGSTAP. Over residues 42–80 the composition is skewed to low complexity; the sequence is APATANNQAATNPASNTPAVPNAPAATSAPSSVPGSTAP. Helical transmembrane passes span 367–387, 441–461, 480–500, and 510–530; these read LLGN…AVFY, LPMV…LASV, PYFI…KLNP, and VMMV…AGLV.

The protein belongs to the OXA1/ALB3/YidC family. Type 1 subfamily. Interacts with the Sec translocase complex via SecD. Specifically interacts with transmembrane segments of nascent integral membrane proteins during membrane integration.

The protein resides in the cell inner membrane. Its function is as follows. Required for the insertion and/or proper folding and/or complex formation of integral membrane proteins into the membrane. Involved in integration of membrane proteins that insert both dependently and independently of the Sec translocase complex, as well as at least some lipoproteins. Aids folding of multispanning membrane proteins. The chain is Membrane protein insertase YidC from Bordetella avium (strain 197N).